The primary structure comprises 310 residues: Putative methyltransferase mtx subunit H (310 aa).

This sequence belongs to the MtrH family. As to quaternary structure, may be part of a complex composed of 3 subunits; MtxA, MtxH and MtxX.

In Methanosarcina mazei (strain ATCC BAA-159 / DSM 3647 / Goe1 / Go1 / JCM 11833 / OCM 88) (Methanosarcina frisia), this protein is Putative methyltransferase mtx subunit H (mtxH).